The chain runs to 83 residues: Mu-theraphotoxin-Hhn2f (83 aa).

The N-terminal stretch at 1-21 (MKASMFLALAGLVLLFVVGYA) is a signal peptide. The propeptide occupies 22–48 (SESEEKEFPIELLSKIFAVDVFKGEER). 3 cysteine pairs are disulfide-bonded: Cys-50/Cys-65, Cys-57/Cys-70, and Cys-64/Cys-77. A Leucine amide modification is found at Leu-81.

This sequence belongs to the neurotoxin 10 (Hwtx-1) family. 15 (Hntx-3) subfamily. As to quaternary structure, monomer. In terms of tissue distribution, expressed by the venom gland.

The protein resides in the secreted. Functionally, lethal neurotoxin. Selectively blocks tetrodotoxin-sensitive voltage-gated sodium channels (Nav). Does not affect tetrodotoxin-resistant voltage-gated sodium channels or calcium channels. In Cyriopagopus hainanus (Chinese bird spider), this protein is Mu-theraphotoxin-Hhn2f.